Reading from the N-terminus, the 312-residue chain is Methionyl-tRNA formyltransferase (312 aa).

109–112 (SLLP) is a binding site for (6S)-5,6,7,8-tetrahydrofolate.

This sequence belongs to the Fmt family.

The catalysed reaction is L-methionyl-tRNA(fMet) + (6R)-10-formyltetrahydrofolate = N-formyl-L-methionyl-tRNA(fMet) + (6S)-5,6,7,8-tetrahydrofolate + H(+). Its function is as follows. Attaches a formyl group to the free amino group of methionyl-tRNA(fMet). The formyl group appears to play a dual role in the initiator identity of N-formylmethionyl-tRNA by promoting its recognition by IF2 and preventing the misappropriation of this tRNA by the elongation apparatus. In Nitrosospira multiformis (strain ATCC 25196 / NCIMB 11849 / C 71), this protein is Methionyl-tRNA formyltransferase.